A 475-amino-acid polypeptide reads, in one-letter code: MSSPNIWSTGSSVYSTPVFSQKMTLWILLLLSLYPGLTRQKSDDDYEDYASNKTWVLTPKVPEGDVTVILNNLLEGYDNKLRPDIGVKPTLIHTDMYVNSIGPVNAINMEYTIDIFFGQTWYDRRLKFNSTIKVLRLNSNMVGKIWIPDTFFRNSKKADAHWITTPNRMLRIWNDGRVLYTLRLTIDAECQLQLHNFPMDEHSCPLEFSSYGYPREEIVYQWKRSSVEVSDTRSWRLYQFSFVGLRNTTEVVKTTSGDYVVMTVYFDLSRRMGYFTIQTYIPCTLIVVLSWVSFWINKDAVPARTSLGITTVLTMTTLSTIARKSLPKVSYVTAMDLFVSVCFIFVFSALVEYGTLHYFVSNRKPSKDKDKKKKNPLLRMFSFKAPTIDIRPRSATIQMNNATHLQERDEEYGYECLDGKDCASFFCCFEDCRTGAWRHGRIHIRIAKMDSYARIFFPTAFCLFNLVYWVSYLYL.

Positions 1–39 are cleaved as a signal peptide; the sequence is MSSPNIWSTGSSVYSTPVFSQKMTLWILLLLSLYPGLTR. Residues 41 to 275 are Extracellular-facing; that stretch reads KSDDDYEDYA…FDLSRRMGYF (235 aa). N-linked (GlcNAc...) asparagine glycosylation is found at Asn-52 and Asn-129. An intrachain disulfide couples Cys-190 to Cys-204. N-linked (GlcNAc...) asparagine glycosylation occurs at Asn-247. Residues 276–296 traverse the membrane as a helical segment; it reads TIQTYIPCTLIVVLSWVSFWI. Over 297–302 the chain is Cytoplasmic; the sequence is NKDAVP. A helical transmembrane segment spans residues 303-322; the sequence is ARTSLGITTVLTMTTLSTIA. The Extracellular portion of the chain corresponds to 323–334; it reads RKSLPKVSYVTA. Residues 335–359 form a helical membrane-spanning segment; that stretch reads MDLFVSVCFIFVFSALVEYGTLHYF. Over 360-451 the chain is Cytoplasmic; that stretch reads VSNRKPSKDK…IHIRIAKMDS (92 aa). Ser-382 is modified (phosphoserine; by PKC). The chain crosses the membrane as a helical span at residues 452–472; sequence YARIFFPTAFCLFNLVYWVSY. Topologically, residues 473-475 are extracellular; the sequence is LYL.

This sequence belongs to the ligand-gated ion channel (TC 1.A.9) family. Gamma-aminobutyric acid receptor (TC 1.A.9.5) subfamily. GABRG2 sub-subfamily. Heteropentamer, formed by a combination of alpha (GABRA1-6), beta (GABRB1-3), gamma (GABRG1-3), delta (GABRD), epsilon (GABRE), rho (GABRR1-3), pi (GABRP) and theta (GABRQ) chains, each subunit exhibiting distinct physiological and pharmacological properties. Interacts with GABARAP. Interacts with KIF21B. Identified in a complex of 720 kDa composed of LHFPL4, NLGN2, GABRA1, GABRB2, GABRG2 and GABRB3. Interacts with LHFPL4. Interacts with SHISA7; interaction leads to the regulation of GABA(A) receptor trafficking, channel deactivation kinetics and pharmacology. Palmitoylated by ZDHHC3/GODZ; required for the accumulation of GABA(A) receptors at the postsynaptic membrane of inhibitory GABAergic synapses. Post-translationally, glycosylated.

Its subcellular location is the postsynaptic cell membrane. It is found in the cell membrane. It localises to the cell projection. The protein resides in the dendrite. The protein localises to the cytoplasmic vesicle membrane. The enzyme catalyses chloride(in) = chloride(out). Allosterically activated by benzodiazepines. Activated by pentobarbital. Inhibited by the antagonist bicuculline. Inhibited by zinc ions. Potentiated by histamine. In terms of biological role, gamma subunit of the heteropentameric ligand-gated chloride channel gated by gamma-aminobutyric acid (GABA), a major inhibitory neurotransmitter in the brain. GABA-gated chloride channels, also named GABA(A) receptors (GABAAR), consist of five subunits arranged around a central pore and contain GABA active binding site(s) located at the alpha and beta subunit interface(s). When activated by GABA, GABAARs selectively allow the flow of chloride anions across the cell membrane down their electrochemical gradient. Gamma-2/GABRG2-containing GABAARs are found at both synaptic and extrasynaptic sites. Chloride influx into the postsynaptic neuron following GABAAR opening decreases the neuron ability to generate a new action potential, thereby reducing nerve transmission. GABAARs containing alpha-1 and beta-2 or -3 subunits exhibit synaptogenic activity; the gamma-2 subunit being necessary but not sufficient to induce rapid synaptic contacts formation. Extrasynaptic gamma-2-containing receptors contribute to the tonic GABAergic inhibition. GABAARs function also as histamine receptor where histamine binds at the interface of two neighboring beta subunits and potentiates GABA response in a gamma-2 subunit-controlled manner. This chain is Gamma-aminobutyric acid receptor subunit gamma-2 (GABRG2), found in Bos taurus (Bovine).